The chain runs to 212 residues: ER lumen protein-retaining receptor 2 (212 aa).

The Lumenal portion of the chain corresponds to 1-4 (MNIF). Residues 5-24 (RLTGDLSHLAAIVILLLKIW) form a helical membrane-spanning segment. Topologically, residues 25 to 32 (KTRSCAGI) are cytoplasmic. A helical transmembrane segment spans residues 33 to 52 (SGKSQLLFALVFTTRYLDLF). The interaction with the K-D-E-L motif on target proteins stretch occupies residues 47–48 (RY). Residues 53-58 (TSFISL) lie on the Lumenal side of the membrane. Residues 59-79 (YNTSMKVIYLACSYATVYLIY) traverse the membrane as a helical segment. Over 80–92 (LKFKATYDGNHDT) the chain is Cytoplasmic. The helical transmembrane segment at 93–110 (FRVEFLVVPVGGLSFLVN) threads the bilayer. Residues 111-116 (HDFSPL) lie on the Lumenal side of the membrane. A helical transmembrane segment spans residues 117-135 (EILWTFSIYLESVAILPQL). Over 136–149 (FMISKTGEAETITT) the chain is Cytoplasmic. The chain crosses the membrane as a helical span at residues 150 to 168 (HYLFFLGLYRALYLVNWIW). Residues 159-169 (RALYLVNWIWR) are interaction with the K-D-E-L motif on target proteins. Residues 169–178 (RFYFEGFFDL) lie on the Lumenal side of the membrane. Residues 179 to 199 (IAVVAGVVQTILYCDFFYLYI) traverse the membrane as a helical segment. At 200–212 (TKVLKGKKLSLPA) the chain is on the cytoplasmic side. The important for recycling of cargo proteins with the sequence motif K-D-E-L from the Golgi to the endoplasmic reticulum stretch occupies residues 204–207 (KGKK).

It belongs to the ERD2 family.

Its subcellular location is the endoplasmic reticulum membrane. The protein localises to the golgi apparatus membrane. The protein resides in the cytoplasmic vesicle. It localises to the COPI-coated vesicle membrane. Membrane receptor that binds the K-D-E-L sequence motif in the C-terminal part of endoplasmic reticulum resident proteins and maintains their localization in that compartment by participating to their vesicle-mediated recycling back from the Golgi. Binding is pH dependent, and is optimal at pH 5-5.4. The chain is ER lumen protein-retaining receptor 2 (KDELR2) from Homo sapiens (Human).